The following is a 434-amino-acid chain: Purple acid phosphatase 22 (434 aa).

Residues 1-22 (MKLFGLFLSFTLLFLCPFISQA) form the signal peptide. A glycan (N-linked (GlcNAc...) asparagine) is linked at N116. Fe cation contacts are provided by D148, D175, and Y178. A Zn(2+)-binding site is contributed by D175. Zn(2+) contacts are provided by N208 and H292. N208 contributes to the substrate binding site. H302 (proton donor) is an active-site residue. Position 329 (H329) interacts with Zn(2+). 329–331 (HVH) contacts substrate. H331 provides a ligand contact to Fe cation. N-linked (GlcNAc...) asparagine glycosylation is present at N403.

This sequence belongs to the metallophosphoesterase superfamily. Purple acid phosphatase family. Homodimer. It depends on Fe cation as a cofactor. Requires Zn(2+) as cofactor. In terms of tissue distribution, expressed in roots, stems, leaves, flowers and siliques.

The protein localises to the secreted. The enzyme catalyses a phosphate monoester + H2O = an alcohol + phosphate. This chain is Purple acid phosphatase 22 (PAP22), found in Arabidopsis thaliana (Mouse-ear cress).